The sequence spans 93 residues: Aspartyl/glutamyl-tRNA(Asn/Gln) amidotransferase subunit C (93 aa).

The protein belongs to the GatC family. In terms of assembly, heterotrimer of A, B and C subunits.

The catalysed reaction is L-glutamyl-tRNA(Gln) + L-glutamine + ATP + H2O = L-glutaminyl-tRNA(Gln) + L-glutamate + ADP + phosphate + H(+). It catalyses the reaction L-aspartyl-tRNA(Asn) + L-glutamine + ATP + H2O = L-asparaginyl-tRNA(Asn) + L-glutamate + ADP + phosphate + 2 H(+). Its function is as follows. Allows the formation of correctly charged Asn-tRNA(Asn) or Gln-tRNA(Gln) through the transamidation of misacylated Asp-tRNA(Asn) or Glu-tRNA(Gln) in organisms which lack either or both of asparaginyl-tRNA or glutaminyl-tRNA synthetases. The reaction takes place in the presence of glutamine and ATP through an activated phospho-Asp-tRNA(Asn) or phospho-Glu-tRNA(Gln). This Methanocella arvoryzae (strain DSM 22066 / NBRC 105507 / MRE50) protein is Aspartyl/glutamyl-tRNA(Asn/Gln) amidotransferase subunit C.